We begin with the raw amino-acid sequence, 910 residues long: MQDKYNHTEVERAAHAHWNANDAYRVTEDQAKPKFYACSMLPYPSGKLHMGHVRNYTINDMLTRSLRMKGHNVLMPMGWDAFGLPAENAALKNGVPPAQWTYDNIAYMKKQMQAMGLAIDWSREIATCDPDYYKWNQWLFLKMLDKGIAYRKTQVVNWDPVDQTVLANEQVIDGRGWRTGALVEKREIPGYYLKITDYAQELLDHVQIGNEKATLTGWPDKVRLMQENWIGKSAGVRFAFPHDIRNAAGERIQDGKLYVFTTRADTIMGVTFCAVAPEHPLAQHAAASNAALAAFIEECKKGGTTEAELALKEKEGMPTGLFVTHPLTGEQVEVWVGNYVLMSYGDGAVMGVPAHDERDFAFALKYQLPIKQVVLVDGETFDFHQWQDWYGDKERGVTINSGNFSGLSYQDAVAAVAHALAEKGLGELKTTWRLRDWGISRQRYWGTPIPIIHCESCGAVPVPEKDLPVVLPQDLVPDGSGNPLAKCEAFLKVDCPCCGKPARRETDTMDTFVDSSWYFMRYCDPKNRDAMVAGGTDYWMRDQKAATGGSGMDQYIGGIEHAILHLLYARFWTKVMRDLGLVKVDEPFTKLLTQGMVLNHIYSRRTAKGAKDYFWPHDVEHVYDEAGKIVGAKLKNPAESGDGLLPVGTPIDYEGVGTMSKSKNNGVDPQQLIEKYGADTARLYTMFTAPPELTLEWNDAAVEGSYRFLRRVWNFGVKLSAIDKDAALASVAGAASLKDVQFGKEAKALRLEIHTVLKQVDYDYQRMQYNTVVSGAMKMINALEDFKATDSAGAQVALIEGFGILLRVLYPATPHIAHVLWDELGYAGTLGDLLDAAWPQVAPDALVQDELELMLQVNGKLRGAIRVAASADKAAIEQAALASEDFHKFAEGKAPKKVIIVPGRLVNVVV.

The 'HIGH' region motif lies at 42-52 (PYPSGKLHMGH). Residues 658–662 (TMSKS) carry the 'KMSKS' region motif. Lysine 661 lines the ATP pocket.

It belongs to the class-I aminoacyl-tRNA synthetase family.

The protein resides in the cytoplasm. It carries out the reaction tRNA(Leu) + L-leucine + ATP = L-leucyl-tRNA(Leu) + AMP + diphosphate. The chain is Leucine--tRNA ligase from Acidovorax sp. (strain JS42).